The following is a 101-amino-acid chain: Small ribosomal subunit protein uS10 (101 aa).

The protein belongs to the universal ribosomal protein uS10 family. Part of the 30S ribosomal subunit.

Involved in the binding of tRNA to the ribosomes. The protein is Small ribosomal subunit protein uS10 of Christiangramia forsetii (strain DSM 17595 / CGMCC 1.15422 / KT0803) (Gramella forsetii).